A 172-amino-acid chain; its full sequence is Cytidylate kinase (172 aa).

Residue 7–15 (GPPGSGTST) participates in ATP binding.

The protein belongs to the cytidylate kinase family. Type 2 subfamily.

It is found in the cytoplasm. It carries out the reaction CMP + ATP = CDP + ADP. The catalysed reaction is dCMP + ATP = dCDP + ADP. The chain is Cytidylate kinase from Methanothrix thermoacetophila (strain DSM 6194 / JCM 14653 / NBRC 101360 / PT) (Methanosaeta thermophila).